Reading from the N-terminus, the 491-residue chain is Trigger factor (491 aa).

The PPIase FKBP-type domain occupies 169 to 254 (GDRVTIDYLG…VKDVAAAAPI (86 aa)). The segment at 433-491 (KTVSKDELMAEDEAEDKPAKKAPAKKKAAAKAEAGEGEEAAAPKKKAPAKKKAADDSAE) is disordered. Basic residues predominate over residues 452 to 461 (KKAPAKKKAA).

Belongs to the FKBP-type PPIase family. Tig subfamily.

Its subcellular location is the cytoplasm. The catalysed reaction is [protein]-peptidylproline (omega=180) = [protein]-peptidylproline (omega=0). In terms of biological role, involved in protein export. Acts as a chaperone by maintaining the newly synthesized protein in an open conformation. Functions as a peptidyl-prolyl cis-trans isomerase. The protein is Trigger factor of Sinorhizobium fredii (strain NBRC 101917 / NGR234).